Consider the following 354-residue polypeptide: GTPase Obg (354 aa).

In terms of domain architecture, Obg spans 1–159 (MKYIDEAIIH…ADLKLELKVL (159 aa)). The OBG-type G domain maps to 160–334 (ADVGLLGMPN…LTYAIMEFLE (175 aa)). GTP contacts are provided by residues 166–173 (GMPNAGKS), 191–195 (FTTMH), 213–216 (DIPG), 284–287 (NKVD), and 315–317 (SAM). Mg(2+)-binding residues include Ser-173 and Thr-193.

It belongs to the TRAFAC class OBG-HflX-like GTPase superfamily. OBG GTPase family. As to quaternary structure, monomer. Mg(2+) is required as a cofactor.

Its subcellular location is the cytoplasm. Functionally, an essential GTPase which binds GTP, GDP and possibly (p)ppGpp with moderate affinity, with high nucleotide exchange rates and a fairly low GTP hydrolysis rate. Plays a role in control of the cell cycle, stress response, ribosome biogenesis and in those bacteria that undergo differentiation, in morphogenesis control. The polypeptide is GTPase Obg (Nitrosospira multiformis (strain ATCC 25196 / NCIMB 11849 / C 71)).